A 231-amino-acid chain; its full sequence is Biosynthetic peptidoglycan transglycosylase (231 aa).

Residues 12 to 34 (AAVLAGLALLLVALAVSYRWVPP) form a helical membrane-spanning segment.

This sequence belongs to the glycosyltransferase 51 family.

Its subcellular location is the cell inner membrane. It carries out the reaction [GlcNAc-(1-&gt;4)-Mur2Ac(oyl-L-Ala-gamma-D-Glu-L-Lys-D-Ala-D-Ala)](n)-di-trans,octa-cis-undecaprenyl diphosphate + beta-D-GlcNAc-(1-&gt;4)-Mur2Ac(oyl-L-Ala-gamma-D-Glu-L-Lys-D-Ala-D-Ala)-di-trans,octa-cis-undecaprenyl diphosphate = [GlcNAc-(1-&gt;4)-Mur2Ac(oyl-L-Ala-gamma-D-Glu-L-Lys-D-Ala-D-Ala)](n+1)-di-trans,octa-cis-undecaprenyl diphosphate + di-trans,octa-cis-undecaprenyl diphosphate + H(+). Its pathway is cell wall biogenesis; peptidoglycan biosynthesis. In terms of biological role, peptidoglycan polymerase that catalyzes glycan chain elongation from lipid-linked precursors. This is Biosynthetic peptidoglycan transglycosylase from Rhodospirillum centenum (strain ATCC 51521 / SW).